A 105-amino-acid chain; its full sequence is Heat shock protein HspQ (105 aa).

Belongs to the HspQ family.

Its subcellular location is the cytoplasm. In terms of biological role, involved in the degradation of certain denaturated proteins, including DnaA, during heat shock stress. This Escherichia fergusonii (strain ATCC 35469 / DSM 13698 / CCUG 18766 / IAM 14443 / JCM 21226 / LMG 7866 / NBRC 102419 / NCTC 12128 / CDC 0568-73) protein is Heat shock protein HspQ.